A 273-amino-acid chain; its full sequence is MNDKHLPDASAENPWLPLRQLTPARIALGRTGTSLPTRPQLDFQYAHAQARDAVHLPFDHASIGDGLRQRGRDSLLLHSAAADRHVYLQRPDLGRRLDEASVRRLREHAAGYDGQIDLAIVVADGLSALAVQRHTLPFLERLEEQALAEGWSLSPVVLVEQGRVAVADEIGELLRARMSVILIGERPGLSSPDSLGLYFTWAPRVGLTDAYRNCISNVRLEGLSYGMAAHRLLYLMREACRRQLSGVNLKDEAEVQSLEGDAPRTGNFLLARD.

Residues valine 164, glutamate 185, and cysteine 214 each contribute to the adenosylcob(III)alamin site.

This sequence belongs to the EutC family. As to quaternary structure, the basic unit is a heterodimer which dimerizes to form tetramers. The heterotetramers trimerize; 6 large subunits form a core ring with 6 small subunits projecting outwards. Adenosylcob(III)alamin serves as cofactor.

The protein localises to the bacterial microcompartment. It carries out the reaction ethanolamine = acetaldehyde + NH4(+). It functions in the pathway amine and polyamine degradation; ethanolamine degradation. In terms of biological role, catalyzes the deamination of various vicinal amino-alcohols to oxo compounds. Allows this organism to utilize ethanolamine as the sole source of nitrogen and carbon in the presence of external vitamin B12. The polypeptide is Ethanolamine ammonia-lyase small subunit (Pseudomonas paraeruginosa (strain DSM 24068 / PA7) (Pseudomonas aeruginosa (strain PA7))).